The following is a 610-amino-acid chain: Myoneurin (610 aa).

Residues 24-89 (CDCTVVIGEF…IYTGTLNLDS (66 aa)) form the BTB domain. Positions 156-199 (SEVSTDSVQANPKPRALTKKSSQSKKKKKAFSSQKPGQSKAVQY) are disordered. Residues 171 to 185 (ALTKKSSQSKKKKKA) show a composition bias toward basic residues. 2 short sequence motifs (nuclear localization signal) span residues 174–190 (KKSS…SSQK) and 257–262 (KRKRRK). C2H2-type zinc fingers lie at residues 302-324 (PMCN…MRIH), 330-352 (YVCH…VRTH), 358-381 (YKCE…RMHH), 387-409 (YKCD…ARKH), 415-437 (YVCD…VRRH), 443-465 (YVCD…SRKH), 471-493 (YICG…FRSH), and 499-522 (FICE…TKVH). The tract at residues 519 to 548 (TKVHSGTDKNPDCSVDDHAVSEQDSVQRSP) is disordered. The segment covering 523-539 (SGTDKNPDCSVDDHAVS) has biased composition (basic and acidic residues).

It belongs to the krueppel C2H2-type zinc-finger protein family. In terms of tissue distribution, mainly expressed in the neuromuscular system. Located in and around synaptic myonuclei in adult muscle. Expression is dysregulated after nerve injury. Also found in the cerebellum, testis, heart, brain and liver.

It localises to the nucleus. The sequence is that of Myoneurin (Mynn) from Mus musculus (Mouse).